A 243-amino-acid chain; its full sequence is Small ribosomal subunit protein uS3 (243 aa).

The KH type-2 domain maps to 39 to 107 (LRKLISKELQ…KIKLNIKEIH (69 aa)). The disordered stretch occupies residues 212–243 (VAKSPAEPATTAPTPAPERRERQPRRNSNASA).

This sequence belongs to the universal ribosomal protein uS3 family. Part of the 30S ribosomal subunit. Forms a tight complex with proteins S10 and S14.

Binds the lower part of the 30S subunit head. Binds mRNA in the 70S ribosome, positioning it for translation. The sequence is that of Small ribosomal subunit protein uS3 from Chloroflexus aurantiacus (strain ATCC 29364 / DSM 637 / Y-400-fl).